Consider the following 146-residue polypeptide: Small ribosomal subunit protein bS6 (146 aa).

The segment at 94 to 146 (GPITTPSPMMQEGKSRPPHSSDEDSENTAPAKAKTADSPGEDTRTTEESDPKP) is disordered. 2 stretches are compositionally biased toward basic and acidic residues: residues 106 to 115 (GKSRPPHSSD) and 134 to 146 (EDTR…DPKP).

Belongs to the bacterial ribosomal protein bS6 family.

Binds together with bS18 to 16S ribosomal RNA. The sequence is that of Small ribosomal subunit protein bS6 from Nitrosomonas europaea (strain ATCC 19718 / CIP 103999 / KCTC 2705 / NBRC 14298).